Consider the following 549-residue polypeptide: Oxygen-dependent choline dehydrogenase (549 aa).

An FAD-binding site is contributed by 4–33 (DFVIIGSGSAGSAMAYRLSENGRYSVIVIE). The active-site Proton acceptor is histidine 465.

Belongs to the GMC oxidoreductase family. The cofactor is FAD.

It catalyses the reaction choline + A = betaine aldehyde + AH2. It carries out the reaction betaine aldehyde + NAD(+) + H2O = glycine betaine + NADH + 2 H(+). The protein operates within amine and polyamine biosynthesis; betaine biosynthesis via choline pathway; betaine aldehyde from choline (cytochrome c reductase route): step 1/1. Its function is as follows. Involved in the biosynthesis of the osmoprotectant glycine betaine. Catalyzes the oxidation of choline to betaine aldehyde and betaine aldehyde to glycine betaine at the same rate. This Brucella suis biovar 1 (strain 1330) protein is Oxygen-dependent choline dehydrogenase.